Here is a 330-residue protein sequence, read N- to C-terminus: Phenylalanine--tRNA ligase alpha subunit (330 aa).

Glu254 contributes to the Mg(2+) binding site.

It belongs to the class-II aminoacyl-tRNA synthetase family. Phe-tRNA synthetase alpha subunit type 1 subfamily. As to quaternary structure, tetramer of two alpha and two beta subunits. The cofactor is Mg(2+).

The protein resides in the cytoplasm. The catalysed reaction is tRNA(Phe) + L-phenylalanine + ATP = L-phenylalanyl-tRNA(Phe) + AMP + diphosphate + H(+). The chain is Phenylalanine--tRNA ligase alpha subunit (pheS) from Neisseria meningitidis serogroup A / serotype 4A (strain DSM 15465 / Z2491).